The chain runs to 300 residues: MILEGSGVMNLNPSNNLLHQQPTWTDSYSTCNVSSGFFGGQWHEIHPQYWTKYQVWEWLQHLLDTNQLDASCIPFQEFDVNGEHLCSMSLQEFTRAAGTAGQLLYSNLQHLKWNGQCSSDLFQSTHNVIVKTEQTDPSIMNTWKEENYLYDTNYGSTVDLLDSKTFCRAQISMTTTGHLPIAESPDTKKEQDHPTKPHTKKHNPRGTHLWEFIRDILLNPDKNPGLIKWEDRSEGIFRFLKSEAVAQLWGKKKNNSSMTYEKLSRAMRYYYKREILERVDGRRLVYKFGKNARGWRENEN.

The region spanning 29-115 (STCNVSSGFF…SNLQHLKWNG (87 aa)) is the PNT domain. Residues 179–204 (LPIAESPDTKKEQDHPTKPHTKKHNP) are disordered. Residues 185–195 (PDTKKEQDHPT) are compositionally biased toward basic and acidic residues. The ETS DNA-binding region spans 207–289 (THLWEFIRDI…DGRRLVYKFG (83 aa)).

This sequence belongs to the ETS family.

The protein resides in the nucleus. Transcriptional activator that may play a role in regulating epithelial cell differentiation and proliferation. May act as a repressor for a specific subset of ETS/AP-1-responsive genes, and as a modulator of the nuclear response to mitogen-activated protein kinase signaling cascades. Binds to DNA sequences containing the consensus nucleotide core sequence GGAA. Involved in regulation of TNFRSF10B/DR5 expression through Ets-binding sequences on the TNFRSF10B/DR5 promoter. The sequence is that of ETS homologous factor (EHF) from Bos taurus (Bovine).